A 559-amino-acid chain; its full sequence is Potassium-transporting ATPase potassium-binding subunit (559 aa).

13 helical membrane-spanning segments follow: residues 5-25, 27-47, 63-83, 132-152, 170-190, 253-273, 283-303, 327-347, 356-376, 379-399, 416-436, 484-504, and 524-544; these read GFLLIASFLLILLVLAKPLGS, LARLIAAVPLPGVAGIERILW, LLALLTLNLLGLGILFCLLFW, GLTVQNFLSAATGIAVVFALI, LVRITLWILFPVALIIALFFI, LAQMLAIFLIPAALCFAFGEA, LLWAMSFIFVVCVAVVMWAEV, FGVLASSLFAVVTTAASCGAV, ALGGMVPMWLMQIGEVVFGGV, GLYGMLLFVLLAVFIAGLMIG, MTALAILVTPMLVLLGSALAM, LLAFCMFVGRFGVIIPVMAIA, and GALFIGLLIGTVLLVGALTFI.

It belongs to the KdpA family. As to quaternary structure, the system is composed of three essential subunits: KdpA, KdpB and KdpC.

The protein resides in the cell inner membrane. Part of the high-affinity ATP-driven potassium transport (or Kdp) system, which catalyzes the hydrolysis of ATP coupled with the electrogenic transport of potassium into the cytoplasm. This subunit binds the periplasmic potassium ions and delivers the ions to the membrane domain of KdpB through an intramembrane tunnel. In Salmonella heidelberg (strain SL476), this protein is Potassium-transporting ATPase potassium-binding subunit.